Reading from the N-terminus, the 529-residue chain is Acid-sensing ion channel 1C (529 aa).

Residues 1–51 lie on the Cytoplasmic side of the membrane; it reads MTAMKGDSEDSIESMRPSNLQVFANNSTLHGMSHIFAYGHMTFRRFLWTLS. A helical membrane pass occupies residues 52 to 68; the sequence is FMGSLGLLMYVCMDRVY. Residues 69–427 lie on the Extracellular side of the membrane; sequence YYFEFPHVTK…EKIEQKKAYE (359 aa). 3 N-linked (GlcNAc...) asparagine glycosylation sites follow: asparagine 86, asparagine 155, and asparagine 161. Intrachain disulfides connect cysteine 95–cysteine 196, cysteine 174–cysteine 181, cysteine 292–cysteine 367, cysteine 310–cysteine 363, cysteine 314–cysteine 361, cysteine 323–cysteine 345, and cysteine 325–cysteine 337. N-linked (GlcNAc...) asparagine glycosylation is present at asparagine 185. N-linked (GlcNAc...) asparagine glycosylation is found at asparagine 368 and asparagine 395. A discontinuously helical transmembrane segment spans residues 428–458; it reads VAGLLGDIGGQMGLFIGASVLTILEIFDYLY. The short motif at 444–446 is the GAS motif; ion selectivity filter element; the sequence is GAS. The Cytoplasmic portion of the chain corresponds to 459 to 529; sequence EVLKDKILGS…PFVVGSNSGK (71 aa).

It belongs to the amiloride-sensitive sodium channel (TC 1.A.6) family. ASIC1 subfamily. As to quaternary structure, homotrimer. Heterotrimer; with other ASIC proteins producing channel with different properties. Interacts with asic1a. Expressed in central nervous system.

Its subcellular location is the cell membrane. It localises to the postsynaptic cell membrane. The protein localises to the cell projection. It is found in the dendrite. The catalysed reaction is Na(+)(in) = Na(+)(out). It carries out the reaction K(+)(in) = K(+)(out). It catalyses the reaction Li(+)(in) = Li(+)(out). The enzyme catalyses Ca(2+)(in) = Ca(2+)(out). Its activity is regulated as follows. Inhibited by the diuretic drug amiloride. Forms voltage-independent, pH-gated trimeric sodium channels that act as postsynaptic excitatory receptors in the nervous system, playing a crucial role in regulating synaptic plasticity, learning, and memory. Upon extracellular pH drop this channel elicits transient, fast activating, and completely desensitizing inward currents. Displays high selectivity for sodium ions but can also permit the permeation of other cations. The polypeptide is Acid-sensing ion channel 1C (Danio rerio (Zebrafish)).